A 245-amino-acid polypeptide reads, in one-letter code: Eukaryotic translation initiation factor 6 (245 aa).

Tyr-113 is modified (phosphotyrosine). Residue Thr-165 is modified to Phosphothreonine. Phosphoserine is present on Ser-166. Phosphoserine; by CK1 is present on residues Ser-174 and Ser-175. Phosphoserine; by PKC is present on Ser-235. Ser-239 and Ser-243 each carry phosphoserine.

This sequence belongs to the eIF-6 family. In terms of assembly, monomer. Associates with the 60S ribosomal subunit. Interacts with RACK1. Interacts with DICER1, AGO2, TARBP2, MOV10 and RPL7A; they form a large RNA-induced silencing complex (RISC). In terms of processing, phosphorylation at Ser-174 and Ser-175 by CSNK1D/CK1 promotes nuclear export. Post-translationally, ufmylated by UFL1. As to expression, expressed at very high levels in colon carcinoma with lower levels in normal colon and ileum and lowest levels in kidney and muscle (at protein level).

Its subcellular location is the cytoplasm. It localises to the nucleus. The protein localises to the nucleolus. Its function is as follows. Binds to the 60S ribosomal subunit and prevents its association with the 40S ribosomal subunit to form the 80S initiation complex in the cytoplasm. Behaves as a stimulatory translation initiation factor downstream insulin/growth factors. Is also involved in ribosome biogenesis. Associates with pre-60S subunits in the nucleus and is involved in its nuclear export. Cytoplasmic release of TIF6 from 60S subunits and nuclear relocalization is promoted by a RACK1 (RACK1)-dependent protein kinase C activity. In tissues responsive to insulin, controls fatty acid synthesis and glycolysis by exerting translational control of adipogenic transcription factors such as CEBPB, CEBPD and ATF4 that have G/C rich or uORF in their 5'UTR. Required for ROS-dependent megakaryocyte maturation and platelets formation, controls the expression of mitochondrial respiratory chain genes involved in reactive oxygen species (ROS) synthesis. Involved in miRNA-mediated gene silencing by the RNA-induced silencing complex (RISC). Required for both miRNA-mediated translational repression and miRNA-mediated cleavage of complementary mRNAs by RISC. Modulates cell cycle progression and global translation of pre-B cells, its activation seems to be rate-limiting in tumorigenesis and tumor growth. In Homo sapiens (Human), this protein is Eukaryotic translation initiation factor 6.